An 87-amino-acid polypeptide reads, in one-letter code: MSERLPQRREVHPEERVRNIWERERDTWQWTSIRVPEEILQRWLAMLRSGRNRNKVYREMQKWMSIHPKAPVIRPCGCRLCNPGWET.

Positions 40 to 47 (LQRWLAML) match the Nuclear export signal motif. Residues 48–55 (RSGRNRNK) carry the Nuclear localization signal motif.

The protein localises to the virion. It is found in the host nucleus. Seems to function as a Vpr-like protein, since it mediates host cell cycle arrest in G2 phase. Cell cycle arrest creates a favorable environment for maximizing viral expression and production. The chain is Probable Vpr-like protein (tat) from Caprine arthritis encephalitis virus (strain 63) (CAEV-63).